Here is a 539-residue protein sequence, read N- to C-terminus: BTB/POZ domain-containing protein 6 (539 aa).

Residues 1-23 form the signal peptide; sequence MLLPLACLHGRVAQCLTSLLVLA. The region spanning 137–207 is the BTB domain; that stretch reads ADVHFIVGAL…MYSDEIDLEA (71 aa).

Its subcellular location is the cytoplasm. Adapter protein for the cul3 E3 ubiquitin-protein ligase complex. Involved in late neuronal development and muscle formation. The polypeptide is BTB/POZ domain-containing protein 6 (Btbd6) (Mus musculus (Mouse)).